The sequence spans 321 residues: uncharacterized protein (321 aa).

Y49 serves as the catalytic Proton donor. Position 106 (H106) interacts with substrate.

The protein belongs to the aldo/keto reductase family.

This is an uncharacterized protein from Caenorhabditis elegans.